A 690-amino-acid chain; its full sequence is Glycine--tRNA ligase beta subunit (690 aa).

The protein belongs to the class-II aminoacyl-tRNA synthetase family. Tetramer of two alpha and two beta subunits.

The protein localises to the cytoplasm. The enzyme catalyses tRNA(Gly) + glycine + ATP = glycyl-tRNA(Gly) + AMP + diphosphate. This Buchnera aphidicola subsp. Acyrthosiphon pisum (strain 5A) protein is Glycine--tRNA ligase beta subunit.